The sequence spans 327 residues: Zinc transport protein ZntB (327 aa).

Residues 1–273 (MEAIKGSDVN…ARRTYTMSLM (273 aa)) are Cytoplasmic-facing. The chain crosses the membrane as a helical span at residues 274–294 (AMVFLPSTFLTGLFGVNLGGI). Residues 295 to 300 (PGGGWR) are Periplasmic-facing. The helical transmembrane segment at 301–321 (FGFSLFCILLVVLIGGVTLWL) threads the bilayer. The Cytoplasmic segment spans residues 322 to 327 (HRSKWL).

It belongs to the CorA metal ion transporter (MIT) (TC 1.A.35) family.

It is found in the cell inner membrane. It catalyses the reaction Zn(2+)(out) + H(+)(out) = Zn(2+)(in) + H(+)(in). Its function is as follows. Zinc transporter. Acts as a Zn(2+):proton symporter, which likely mediates zinc ion uptake. The protein is Zinc transport protein ZntB of Salmonella enteritidis PT4 (strain P125109).